The following is a 423-amino-acid chain: Probable peptidoglycan glycosyltransferase FtsW (423 aa).

Residues 1–53 (MNLKEKLFPENRLGLNRFWNFSRGGIDNFRTGLRDAVSGVEQTRSRMMEYDQL) are Cytoplasmic-facing. Residues 54 to 74 (LVWAILSLMLIGLVMVYSASI) form a helical membrane-spanning segment. The Periplasmic portion of the chain corresponds to 75-88 (TLADGPKYANYSSN). Residues 89-109 (FFLIRHMISLAIAIGVGIWAF) form a helical membrane-spanning segment. Topologically, residues 110-119 (KIPTKVWDRY) are cytoplasmic. The helical transmembrane segment at 120–140 (SPVIFGITVLLLIAVLIPGVG) threads the bilayer. The Periplasmic segment spans residues 141–149 (RGVNGAKRW). A helical membrane pass occupies residues 150–170 (IPLGLMNFQSSELMKFAAVIF). Over 171–184 (AASYTVQRQEYLHS) the chain is Cytoplasmic. The chain crosses the membrane as a helical span at residues 185-205 (FVKGMLPMGIAVALVGGLLMA). Topologically, residues 206-208 (EPD) are periplasmic. Residues 209-229 (MGAFVVVALIAFGILFLGGIN) form a helical membrane-spanning segment. The Cytoplasmic segment spans residues 230–231 (AK). Residues 232 to 252 (LFGGLIAVGLMSGATMIAFSP) traverse the membrane as a helical segment. The Periplasmic portion of the chain corresponds to 253–310 (LRRGRMLAFMDPWQVDNAANKGYQLTHSLMAFGRGEWFGTGLGGSVEKLHYLPEAHTD). Residues 311-331 (FIMAVIGEELGFVGVVVMIFL) form a helical membrane-spanning segment. Over 332-359 (FYWIVRRAFLIGRTALQLDRSFAGLAAK) the chain is Cytoplasmic. Residues 360-380 (GVAIWIGWQAFINMGVNLGLL) form a helical membrane-spanning segment. The Periplasmic segment spans residues 381 to 386 (PTKGLT). Residues 387 to 407 (LPLVSYGGSGILMNAVAMAML) traverse the membrane as a helical segment. Residues 408–423 (LRIDFENRILMRGGKL) are Cytoplasmic-facing.

The protein belongs to the SEDS family. FtsW subfamily.

The protein resides in the cell inner membrane. It carries out the reaction [GlcNAc-(1-&gt;4)-Mur2Ac(oyl-L-Ala-gamma-D-Glu-L-Lys-D-Ala-D-Ala)](n)-di-trans,octa-cis-undecaprenyl diphosphate + beta-D-GlcNAc-(1-&gt;4)-Mur2Ac(oyl-L-Ala-gamma-D-Glu-L-Lys-D-Ala-D-Ala)-di-trans,octa-cis-undecaprenyl diphosphate = [GlcNAc-(1-&gt;4)-Mur2Ac(oyl-L-Ala-gamma-D-Glu-L-Lys-D-Ala-D-Ala)](n+1)-di-trans,octa-cis-undecaprenyl diphosphate + di-trans,octa-cis-undecaprenyl diphosphate + H(+). The protein operates within cell wall biogenesis; peptidoglycan biosynthesis. In terms of biological role, peptidoglycan polymerase that is essential for cell division. This chain is Probable peptidoglycan glycosyltransferase FtsW, found in Polynucleobacter necessarius subsp. necessarius (strain STIR1).